The primary structure comprises 526 residues: Peptide chain release factor 3 (526 aa).

Residues 9–277 (NKRRTFAIIS…DFVEYAPGPQ (269 aa)) form the tr-type G domain. Residues 18 to 25 (SHPDAGKT), 86 to 90 (DTPGH), and 140 to 143 (NKLD) each bind GTP.

Belongs to the TRAFAC class translation factor GTPase superfamily. Classic translation factor GTPase family. PrfC subfamily.

It localises to the cytoplasm. Increases the formation of ribosomal termination complexes and stimulates activities of RF-1 and RF-2. It binds guanine nucleotides and has strong preference for UGA stop codons. It may interact directly with the ribosome. The stimulation of RF-1 and RF-2 is significantly reduced by GTP and GDP, but not by GMP. The sequence is that of Peptide chain release factor 3 from Legionella pneumophila (strain Paris).